The following is a 301-amino-acid chain: Glycine--tRNA ligase alpha subunit (301 aa).

Belongs to the class-II aminoacyl-tRNA synthetase family. Tetramer of two alpha and two beta subunits.

It is found in the cytoplasm. It catalyses the reaction tRNA(Gly) + glycine + ATP = glycyl-tRNA(Gly) + AMP + diphosphate. This Shewanella frigidimarina (strain NCIMB 400) protein is Glycine--tRNA ligase alpha subunit.